A 1119-amino-acid polypeptide reads, in one-letter code: Ubiquitin-associated protein 2 (1119 aa).

The disordered stretch occupies residues 1 to 26 (MMTSVSSDHCRGAREKPQISAAQSTQ). Residues 8-17 (DHCRGAREKP) show a composition bias toward basic and acidic residues. Residues 48–92 (KNDSDFEAKVKQLMEVTGKNQDECIVALHDCNGDVNKAINILLEG) form the UBA domain. Positions 105–130 (KKKNFAKENSENKENREKKSEKESSR) form a coiled coil. A compositionally biased stretch (basic and acidic residues) spans 110–130 (AKENSENKENREKKSEKESSR). 7 disordered regions span residues 110–202 (AKEN…YSDS), 385–476 (LGQF…SPST), 622–736 (VHNR…SSHQ), 853–905 (RDGS…VNPA), 937–966 (SAKQHGVNLSTPTPPFQQASGYGQHGYSTG), 982–1020 (GGYAGSSQAPNKSAGSGPGKGVSVSSSTTGLPDMTGSVY), and 1082–1119 (HLPQDAQSGSGQRSQPSSLQPKSQASKPAYGNSPYWTN). Arg166 carries the omega-N-methylarginine modification. Residues 168–182 (KRARGRGFGRGRGRG) show a composition bias toward basic residues. The segment covering 389 to 407 (TTTPSTQQNSTSHPTTTTS) has biased composition (low complexity). 4 positions are modified to phosphoserine: Ser432, Ser439, Ser473, and Ser630. Residues 435–447 (LSQLSQRQQHQSQ) show a composition bias toward low complexity. The segment covering 651-662 (SQQTLDTPKTTG) has biased composition (polar residues). Over residues 663-678 (PPSALPSVSSLPSTTS) the composition is skewed to low complexity. Polar residues predominate over residues 679–694 (CTALLPSTSQHTGDLT). Composition is skewed to low complexity over residues 695-736 (SSPL…SSHQ) and 874-900 (SASPAPATTPAQPQQSQSQTHHTAQQP). Residues 943 to 957 (VNLSTPTPPFQQASG) are compositionally biased toward polar residues. 2 stretches are compositionally biased toward low complexity: residues 1002–1011 (GVSVSSSTTG) and 1088–1102 (QSGSGQRSQPSSLQP).

As to quaternary structure, may interact with ANXA2.

It localises to the nucleus. The protein resides in the chromosome. The protein localises to the cytoplasm. Recruits the ubiquitination machinery to RNA polymerase II for polyubiquitination, removal and degradation, when the transcription-coupled nucleotide excision repair (TC-NER) machinery fails to resolve DNA damage. May promote the degradation of ANXA2. This chain is Ubiquitin-associated protein 2, found in Homo sapiens (Human).